The primary structure comprises 293 residues: Probable mediator of RNA polymerase II transcription subunit 15b (293 aa).

Belongs to the plant Mediator complex subunit 15 family. In terms of assembly, component of the Mediator complex.

It localises to the nucleus. In terms of biological role, component of the Mediator complex, a coactivator involved in the regulated transcription of nearly all RNA polymerase II-dependent genes. Mediator functions as a bridge to convey information from gene-specific regulatory proteins to the basal RNA polymerase II transcription machinery. The Mediator complex, having a compact conformation in its free form, is recruited to promoters by direct interactions with regulatory proteins and serves for the assembly of a functional preinitiation complex with RNA polymerase II and the general transcription factors. The polypeptide is Probable mediator of RNA polymerase II transcription subunit 15b (MED15B) (Arabidopsis thaliana (Mouse-ear cress)).